Reading from the N-terminus, the 417-residue chain is Glutamate-1-semialdehyde 2,1-aminomutase (417 aa).

K263 is subject to N6-(pyridoxal phosphate)lysine.

This sequence belongs to the class-III pyridoxal-phosphate-dependent aminotransferase family. HemL subfamily. The cofactor is pyridoxal 5'-phosphate.

It is found in the cytoplasm. It catalyses the reaction (S)-4-amino-5-oxopentanoate = 5-aminolevulinate. It participates in porphyrin-containing compound metabolism; protoporphyrin-IX biosynthesis; 5-aminolevulinate from L-glutamyl-tRNA(Glu): step 2/2. The polypeptide is Glutamate-1-semialdehyde 2,1-aminomutase (Methanospirillum hungatei JF-1 (strain ATCC 27890 / DSM 864 / NBRC 100397 / JF-1)).